The chain runs to 310 residues: Succinate dehydrogenase assembly factor 2, mitochondrial (310 aa).

Over residues 35 to 48 the composition is skewed to basic and acidic residues; it reads LKDGSDEASPEVKA. Residues 35–67 form a disordered region; it reads LKDGSDEASPEVKAHRANQANKAPNQFVPNTTS. Positions 52–67 are enriched in polar residues; the sequence is NQANKAPNQFVPNTTS.

The protein belongs to the SDHAF2 family. Interacts with the flavoprotein subunit within the SDH catalytic dimer.

The protein resides in the mitochondrion matrix. In terms of biological role, plays an essential role in the assembly of succinate dehydrogenase (SDH), an enzyme complex (also referred to as respiratory complex II) that is a component of both the tricarboxylic acid (TCA) cycle and the mitochondrial electron transport chain, and which couples the oxidation of succinate to fumarate with the reduction of ubiquinone (coenzyme Q) to ubiquinol. Required for flavinylation (covalent attachment of FAD) of the flavoprotein subunit of the SDH catalytic dimer. The sequence is that of Succinate dehydrogenase assembly factor 2, mitochondrial from Penicillium rubens (strain ATCC 28089 / DSM 1075 / NRRL 1951 / Wisconsin 54-1255) (Penicillium chrysogenum).